Here is a 113-residue protein sequence, read N- to C-terminus: Large ribosomal subunit protein bL19 (113 aa).

Belongs to the bacterial ribosomal protein bL19 family.

Its function is as follows. This protein is located at the 30S-50S ribosomal subunit interface and may play a role in the structure and function of the aminoacyl-tRNA binding site. The polypeptide is Large ribosomal subunit protein bL19 (Mycobacteroides abscessus (strain ATCC 19977 / DSM 44196 / CCUG 20993 / CIP 104536 / JCM 13569 / NCTC 13031 / TMC 1543 / L948) (Mycobacterium abscessus)).